The primary structure comprises 413 residues: CinA-like protein (413 aa).

It belongs to the CinA family.

This Crocosphaera subtropica (strain ATCC 51142 / BH68) (Cyanothece sp. (strain ATCC 51142)) protein is CinA-like protein.